The chain runs to 222 residues: UPF0502 protein SO_1867 (222 aa).

Residues 169–193 (EQVSATSLSADSPSADSNSLNAQDR) are compositionally biased toward polar residues. A disordered region spans residues 169–195 (EQVSATSLSADSPSADSNSLNAQDRQQ).

This sequence belongs to the UPF0502 family.

The sequence is that of UPF0502 protein SO_1867 from Shewanella oneidensis (strain ATCC 700550 / JCM 31522 / CIP 106686 / LMG 19005 / NCIMB 14063 / MR-1).